Consider the following 218-residue polypeptide: Small ribosomal subunit protein uS3c (218 aa).

Positions 47–118 constitute a KH type-2 domain; the sequence is VQKNMRTSSG…KLNIAVTRIA (72 aa).

The protein belongs to the universal ribosomal protein uS3 family. As to quaternary structure, part of the 30S ribosomal subunit.

The protein localises to the plastid. Its subcellular location is the chloroplast. This chain is Small ribosomal subunit protein uS3c (rps3), found in Nicotiana sylvestris (Wood tobacco).